Reading from the N-terminus, the 460-residue chain is Gastric inhibitory polypeptide receptor (460 aa).

Residues 1-18 (MPLRLLLLLLWLWGLQWA) form the signal peptide. At 19–134 (ETDSEGQTTT…DQTLILERLQ (116 aa)) the chain is on the extracellular side. Disulfide bonds link Cys42–Cys66, Cys57–Cys99, and Cys80–Cys114. Asn58, Asn68, and Asn73 each carry an N-linked (GlcNAc...) asparagine glycan. The chain crosses the membrane as a helical span at residues 135 to 155 (IMYTVGYSLSLTTLLLALLIL). The Cytoplasmic portion of the chain corresponds to 156 to 166 (SLFRRLHCTRN). Residues 167–185 (YIHMNLFTSFMLRAAAILT) traverse the membrane as a helical segment. The Extracellular portion of the chain corresponds to 186–222 (RDQLLPPLGPYTGDQAPTPWNQALAACRTAQIMTQYC). Residues 223 to 243 (VGANYTWLLVEGVYLHHLLVI) form a helical membrane-spanning segment. Residues 244–255 (VGRSEKGHFRCY) are Cytoplasmic-facing. The chain crosses the membrane as a helical span at residues 256–276 (LLLGWGAPALFVIPWVIVRYL). Topologically, residues 277–297 (RENTQCWERNEVKAIWWIIRT) are extracellular. A helical transmembrane segment spans residues 298 to 318 (PILITILINFLIFIRILGILV). Residues 319 to 337 (SKLRTRQMRCPDYRLRLAR) are Cytoplasmic-facing. A helical transmembrane segment spans residues 338 to 358 (STLTLVPLLGVHEVVFAPVTE). The Extracellular portion of the chain corresponds to 359–370 (EQVEGSLRFAKL). The helical transmembrane segment at 371 to 391 (AFEIFLSSFQGFLVSVLYCFI) threads the bilayer. Residues 392–460 (NKEVQSEIRQ…PGDEVLESYC (69 aa)) lie on the Cytoplasmic side of the membrane.

This sequence belongs to the G-protein coupled receptor 2 family. As to quaternary structure, may form homodimers and heterodimers with GLP1R. In terms of processing, N-glycosylation is required for cell surface expression and lengthens receptor half-life by preventing degradation in the ER.

It localises to the cell membrane. This is a receptor for GIP. The activity of this receptor is mediated by G proteins which activate adenylyl cyclase. The chain is Gastric inhibitory polypeptide receptor (Gipr) from Mus musculus (Mouse).